A 218-amino-acid polypeptide reads, in one-letter code: Thiamine-phosphate synthase (218 aa).

4-amino-2-methyl-5-(diphosphooxymethyl)pyrimidine contacts are provided by residues 43 to 47 and asparagine 75; that span reads QLRMK. Residues aspartate 76 and aspartate 95 each coordinate Mg(2+). Threonine 114 provides a ligand contact to 4-amino-2-methyl-5-(diphosphooxymethyl)pyrimidine. Position 140 to 142 (140 to 142) interacts with 2-[(2R,5Z)-2-carboxy-4-methylthiazol-5(2H)-ylidene]ethyl phosphate; it reads TST. Position 143 (lysine 143) interacts with 4-amino-2-methyl-5-(diphosphooxymethyl)pyrimidine. 2-[(2R,5Z)-2-carboxy-4-methylthiazol-5(2H)-ylidene]ethyl phosphate contacts are provided by residues glycine 171 and 191-192; that span reads VS.

Belongs to the thiamine-phosphate synthase family. It depends on Mg(2+) as a cofactor.

The enzyme catalyses 2-[(2R,5Z)-2-carboxy-4-methylthiazol-5(2H)-ylidene]ethyl phosphate + 4-amino-2-methyl-5-(diphosphooxymethyl)pyrimidine + 2 H(+) = thiamine phosphate + CO2 + diphosphate. It carries out the reaction 2-(2-carboxy-4-methylthiazol-5-yl)ethyl phosphate + 4-amino-2-methyl-5-(diphosphooxymethyl)pyrimidine + 2 H(+) = thiamine phosphate + CO2 + diphosphate. It catalyses the reaction 4-methyl-5-(2-phosphooxyethyl)-thiazole + 4-amino-2-methyl-5-(diphosphooxymethyl)pyrimidine + H(+) = thiamine phosphate + diphosphate. It functions in the pathway cofactor biosynthesis; thiamine diphosphate biosynthesis; thiamine phosphate from 4-amino-2-methyl-5-diphosphomethylpyrimidine and 4-methyl-5-(2-phosphoethyl)-thiazole: step 1/1. In terms of biological role, condenses 4-methyl-5-(beta-hydroxyethyl)thiazole monophosphate (THZ-P) and 2-methyl-4-amino-5-hydroxymethyl pyrimidine pyrophosphate (HMP-PP) to form thiamine monophosphate (TMP). The polypeptide is Thiamine-phosphate synthase (Myxococcus xanthus (strain DK1622)).